The chain runs to 227 residues: 6,7-dimethyl-8-ribityllumazine synthase, chloroplastic (227 aa).

The transit peptide at 1–71 (MKSLASPPCL…LRSSFVQTAA (71 aa)) directs the protein to the chloroplast. 5-amino-6-(D-ribitylamino)uracil contacts are provided by residues Phe-94, 128–130 (SFE), and 152–154 (AVI). 157–158 (DT) is a binding site for (2S)-2-hydroxy-3-oxobutyl phosphate. His-160 (proton donor) is an active-site residue. Phe-185 provides a ligand contact to 5-amino-6-(D-ribitylamino)uracil. Arg-199 is a binding site for (2S)-2-hydroxy-3-oxobutyl phosphate.

This sequence belongs to the DMRL synthase family. Oligomer forming an icosahedral capsid.

The protein localises to the plastid. Its subcellular location is the chloroplast. The enzyme catalyses (2S)-2-hydroxy-3-oxobutyl phosphate + 5-amino-6-(D-ribitylamino)uracil = 6,7-dimethyl-8-(1-D-ribityl)lumazine + phosphate + 2 H2O + H(+). It functions in the pathway cofactor biosynthesis; riboflavin biosynthesis; riboflavin from 2-hydroxy-3-oxobutyl phosphate and 5-amino-6-(D-ribitylamino)uracil: step 1/2. Its function is as follows. Catalyzes the formation of 6,7-dimethyl-8-ribityllumazine by condensation of 5-amino-6-(D-ribitylamino)uracil with 3,4-dihydroxy-2-butanone 4-phosphate. This is the penultimate step in the biosynthesis of riboflavin. This is 6,7-dimethyl-8-ribityllumazine synthase, chloroplastic from Arabidopsis thaliana (Mouse-ear cress).